The sequence spans 333 residues: tRNA (guanine(37)-N(1))/4-demethylwyosine(37)-methyltransferase Taw22 (333 aa).

S-adenosyl-L-methionine is bound by residues Arg-174, Phe-191, 213–214 (EI), and 243–244 (DV).

This sequence belongs to the class I-like SAM-binding methyltransferase superfamily. TRM5/TYW2 family.

It localises to the cytoplasm. It catalyses the reaction guanosine(37) in tRNA + S-adenosyl-L-methionine = N(1)-methylguanosine(37) in tRNA + S-adenosyl-L-homocysteine + H(+). The catalysed reaction is 4-demethylwyosine(37) in tRNA(Phe) + S-adenosyl-L-methionine = isowyosine(37) in tRNA(Phe) + S-adenosyl-L-homocysteine + H(+). Functionally, catalyzes both the N1-methylation of guanosine and the C7-methylation of 4-demethylwyosine (imG-14) at position 37 in tRNA(Phe). In Pyrococcus abyssi (strain GE5 / Orsay), this protein is tRNA (guanine(37)-N(1))/4-demethylwyosine(37)-methyltransferase Taw22.